The sequence spans 239 residues: Purine nucleoside phosphorylase DeoD-type (239 aa).

Histidine 5 lines the a purine D-ribonucleoside pocket. Phosphate contacts are provided by residues glycine 21, arginine 25, arginine 44, and 88-91; that span reads RVGS. A purine D-ribonucleoside is bound by residues 180 to 182 and 204 to 205; these read EME and SD. Aspartate 205 (proton donor) is an active-site residue.

It belongs to the PNP/UDP phosphorylase family. As to quaternary structure, homohexamer; trimer of homodimers.

The enzyme catalyses a purine D-ribonucleoside + phosphate = a purine nucleobase + alpha-D-ribose 1-phosphate. It catalyses the reaction a purine 2'-deoxy-D-ribonucleoside + phosphate = a purine nucleobase + 2-deoxy-alpha-D-ribose 1-phosphate. In terms of biological role, catalyzes the reversible phosphorolytic breakdown of the N-glycosidic bond in the beta-(deoxy)ribonucleoside molecules, with the formation of the corresponding free purine bases and pentose-1-phosphate. The chain is Purine nucleoside phosphorylase DeoD-type from Yersinia pestis bv. Antiqua (strain Antiqua).